The sequence spans 339 residues: Cytochrome c biogenesis protein CcsA (339 aa).

7 consecutive transmembrane segments (helical) span residues 6 to 26, 37 to 57, 71 to 91, 97 to 117, 142 to 162, 247 to 267, and 281 to 299; these read LEHI…LVFW, IGSL…GLLL, LYES…VSEI, WLGI…TVGL, MMIP…ALLI, IISL…VWVN, and TWAL…IRMI.

This sequence belongs to the CcmF/CycK/Ccl1/NrfE/CcsA family. In terms of assembly, may interact with Ccs1.

It localises to the plastid. Its subcellular location is the chloroplast thylakoid membrane. Required during biogenesis of c-type cytochromes (cytochrome c6 and cytochrome f) at the step of heme attachment. The protein is Cytochrome c biogenesis protein CcsA of Anthoceros angustus (Hornwort).